A 345-amino-acid polypeptide reads, in one-letter code: uncharacterized protein (345 aa).

PDZ GRASP-type domains are found at residues 27 to 112 (CGFR…WASI) and 118 to 207 (AIWH…HGVL). The GRASP stretch occupies residues 27–223 (CGFRVLKVEN…LSGPPPQPGD (197 aa)). The segment at 229-345 (PMLGGPDHKV…APQNEELVKN (117 aa)) is disordered. The span at 297–308 (KLSRELDHKTKD) shows a compositional bias: basic and acidic residues. Polar residues-rich tracts occupy residues 309 to 318 (ASSTNDSQTT) and 328 to 338 (VNSTNDESAPQ).

The protein localises to the golgi apparatus membrane. This is an uncharacterized protein from Schizosaccharomyces pombe (strain 972 / ATCC 24843) (Fission yeast).